Reading from the N-terminus, the 388-residue chain is Valine--pyruvate aminotransferase (388 aa).

Lys234 is modified (N6-(pyridoxal phosphate)lysine).

It belongs to the class-I pyridoxal-phosphate-dependent aminotransferase family. The cofactor is pyridoxal 5'-phosphate.

The enzyme catalyses L-valine + pyruvate = 3-methyl-2-oxobutanoate + L-alanine. The chain is Valine--pyruvate aminotransferase from Mycobacterium tuberculosis (strain ATCC 25618 / H37Rv).